Here is a 497-residue protein sequence, read N- to C-terminus: Glycerol kinase (497 aa).

ADP is bound at residue Thr11. Thr11, Ser12, and Ser13 together coordinate ATP. Thr11 provides a ligand contact to sn-glycerol 3-phosphate. ADP is bound at residue Arg15. Residues Arg81, Glu82, Tyr133, and Asp242 each contribute to the sn-glycerol 3-phosphate site. Glycerol contacts are provided by Arg81, Glu82, Tyr133, Asp242, and Gln243. ADP-binding residues include Thr264 and Gly307. ATP contacts are provided by Thr264, Gly307, Gln311, and Gly412. Residues Gly412 and Asn416 each contribute to the ADP site.

Belongs to the FGGY kinase family.

The catalysed reaction is glycerol + ATP = sn-glycerol 3-phosphate + ADP + H(+). Its pathway is polyol metabolism; glycerol degradation via glycerol kinase pathway; sn-glycerol 3-phosphate from glycerol: step 1/1. Inhibited by fructose 1,6-bisphosphate (FBP). Key enzyme in the regulation of glycerol uptake and metabolism. Catalyzes the phosphorylation of glycerol to yield sn-glycerol 3-phosphate. The polypeptide is Glycerol kinase (Polaromonas sp. (strain JS666 / ATCC BAA-500)).